Consider the following 347-residue polypeptide: Isopentenyl-diphosphate delta-isomerase (347 aa).

9–10 contributes to the substrate binding site; sequence RK. FMN contacts are provided by residues Ser-67, 68-70, Ser-98, and Asn-127; that span reads SMT. 98-100 lines the substrate pocket; sequence SQR. Gln-162 lines the substrate pocket. Residue Glu-163 participates in Mg(2+) binding. FMN is bound by residues Lys-194, Thr-224, 274 to 276, and 295 to 296; these read GIK and AA.

Belongs to the IPP isomerase type 2 family. As to quaternary structure, homooctamer. Dimer of tetramers. It depends on FMN as a cofactor. The cofactor is NADPH. Requires Mg(2+) as cofactor.

It is found in the cytoplasm. The catalysed reaction is isopentenyl diphosphate = dimethylallyl diphosphate. Functionally, involved in the biosynthesis of isoprenoids. Catalyzes the 1,3-allylic rearrangement of the homoallylic substrate isopentenyl (IPP) to its allylic isomer, dimethylallyl diphosphate (DMAPP). In Pseudescherichia vulneris (Escherichia vulneris), this protein is Isopentenyl-diphosphate delta-isomerase.